A 320-amino-acid polypeptide reads, in one-letter code: Transcription factor bHLH34 (320 aa).

The bHLH domain occupies Ser162–Leu213. The tract at residues Trp299–Ala320 is disordered. The span at Ala305 to Lys314 shows a compositional bias: basic and acidic residues.

In terms of assembly, homodimer. Expressed constitutively in roots, leaves, stems, and flowers.

It is found in the nucleus. The chain is Transcription factor bHLH34 (BHLH34) from Arabidopsis thaliana (Mouse-ear cress).